Consider the following 183-residue polypeptide: Small ribosomal subunit protein uS4 (183 aa).

The region spanning 106–168 (RRLQTQVYRQ…AGSPLAREGH (63 aa)) is the S4 RNA-binding domain.

This sequence belongs to the universal ribosomal protein uS4 family. In terms of assembly, part of the 30S ribosomal subunit. Contacts protein S5. The interaction surface between S4 and S5 is involved in control of translational fidelity.

In terms of biological role, one of the primary rRNA binding proteins, it binds directly to 16S rRNA where it nucleates assembly of the body of the 30S subunit. With S5 and S12 plays an important role in translational accuracy. This is Small ribosomal subunit protein uS4 from Methanothrix thermoacetophila (strain DSM 6194 / JCM 14653 / NBRC 101360 / PT) (Methanosaeta thermophila).